Here is a 362-residue protein sequence, read N- to C-terminus: Serpentine receptor class delta-2 (362 aa).

The next 7 helical transmembrane spans lie at 27–47 (LSCL…YLIW), 57–77 (YAIY…ISFF), 104–124 (FCYF…WILL), 144–164 (LIRN…VYVF), 209–229 (LISI…ILYF), 264–284 (GIPI…FGII), and 292–312 (ITFR…IIFV).

It belongs to the nematode receptor-like protein srd family.

It localises to the membrane. Thought to be a chemosensory receptor. This Caenorhabditis elegans protein is Serpentine receptor class delta-2 (srd-2).